The primary structure comprises 315 residues: Melanocyte-stimulating hormone receptor (315 aa).

Topologically, residues 1 to 35 (MSTQEPQKSLLGSLNSNATSHLGLATNQSEPWCLY) are extracellular. Residues Asn17 and Asn27 are each glycosylated (N-linked (GlcNAc...) asparagine). Residues 36-61 (VSIPDGLFLSLGLVSLVENVLVVIAI) traverse the membrane as a helical segment. Over 62–70 (TKNRNLHSP) the chain is Cytoplasmic. Residues 71-91 (MYYFICCLALSDLMVSVSIVL) form a helical membrane-spanning segment. The Extracellular segment spans residues 92–116 (ETTIILLLEAGILVARVALVQQLDN). The chain crosses the membrane as a helical span at residues 117 to 138 (LIDVLICGSMVSSLCFLGIIAI). The Cytoplasmic portion of the chain corresponds to 139–161 (DRYISIFYALRYHSIVTLPRARR). A helical transmembrane segment spans residues 162–181 (AVVGIWMVSIVSSTLFITYY). Residues 182–189 (KHTAVLLC) lie on the Extracellular side of the membrane. The chain crosses the membrane as a helical span at residues 190 to 209 (LVTFFLAMLALMAILYAHMF). Residues 210–238 (TRACQHAQGIAQLHKRRRSIRQGFCLKGA) lie on the Cytoplasmic side of the membrane. A helical transmembrane segment spans residues 239-264 (ATLTILLGIFFLCWGPFFLHLLLIVL). Topologically, residues 265-277 (CPQHPTCSCIFKN) are extracellular. A helical transmembrane segment spans residues 278-298 (FNLFLLLIVLSSTVDPLIYAF). Residues 299–315 (RSQELRMTLKEVLLCSW) lie on the Cytoplasmic side of the membrane. A lipid anchor (S-palmitoyl cysteine) is attached at Cys313.

The protein belongs to the G-protein coupled receptor 1 family. Interacts with MGRN1, but does not undergo MGRN1-mediated ubiquitination; this interaction competes with GNAS-binding and thus inhibits agonist-induced cAMP production. Interacts with OPN3; the interaction results in a decrease in MC1R-mediated cAMP signaling and ultimately a decrease in melanin production in melanocytes.

Its subcellular location is the cell membrane. Its function is as follows. Receptor for MSH (alpha, beta and gamma) and ACTH. The activity of this receptor is mediated by G proteins which activate adenylate cyclase. Mediates melanogenesis, the production of eumelanin (black/brown) and phaeomelanin (red/yellow), via regulation of cAMP signaling in melanocytes. The protein is Melanocyte-stimulating hormone receptor (Mc1r) of Mus musculus (Mouse).